The primary structure comprises 162 residues: Glutathione peroxidase-like peroxiredoxin 2 (162 aa).

Cys37 acts as the Cysteine sulfenic acid (-SOH) intermediate in catalysis. Residues Cys37 and Cys83 are joined by a disulfide bond.

It belongs to the glutathione peroxidase family. Monomer.

It is found in the cytoplasm. Its subcellular location is the nucleus. The protein resides in the mitochondrion outer membrane. It localises to the mitochondrion inner membrane. The catalysed reaction is a hydroperoxide + [thioredoxin]-dithiol = an alcohol + [thioredoxin]-disulfide + H2O. Glutathione peroxidase-like protein that protects cells from phospholipid hydroperoxides and nonphospholipid peroxides during oxidative stress. Plays an important role in the oxidative stress-induced response in the presence of Ca(2+). Has peroxidase activity using preferentially thioredoxin as a reducing power. The redox state of the mitochondrial GPX2 is regulated by TRX1 and TRX2 (cytoplasmic thioredoxin), and by TRX3 (mitochondrial matrix thioredoxin). Involved in sporulation. This is Glutathione peroxidase-like peroxiredoxin 2 from Saccharomyces cerevisiae (strain ATCC 204508 / S288c) (Baker's yeast).